The chain runs to 922 residues: Isoleucine--tRNA ligase (922 aa).

Positions 57–67 match the 'HIGH' region motif; the sequence is PYANGDIHLGH. Residue E553 participates in L-isoleucyl-5'-AMP binding. A 'KMSKS' region motif is present at residues 594-598; sequence KMSKS. K597 is an ATP binding site. C892, C895, C912, and C915 together coordinate Zn(2+).

It belongs to the class-I aminoacyl-tRNA synthetase family. IleS type 1 subfamily. Monomer. The cofactor is Zn(2+).

It is found in the cytoplasm. It catalyses the reaction tRNA(Ile) + L-isoleucine + ATP = L-isoleucyl-tRNA(Ile) + AMP + diphosphate. Its function is as follows. Catalyzes the attachment of isoleucine to tRNA(Ile). As IleRS can inadvertently accommodate and process structurally similar amino acids such as valine, to avoid such errors it has two additional distinct tRNA(Ile)-dependent editing activities. One activity is designated as 'pretransfer' editing and involves the hydrolysis of activated Val-AMP. The other activity is designated 'posttransfer' editing and involves deacylation of mischarged Val-tRNA(Ile). This Desulfitobacterium hafniense (strain DSM 10664 / DCB-2) protein is Isoleucine--tRNA ligase.